The following is a 124-amino-acid chain: Non-structural protein 2 (124 aa).

Residues 121 to 124 (DLNP) carry the DLNP; interaction with MAP1B motif.

Belongs to the pneumovirus non-structural protein 2 family. Monomer (instable). Homomultimer. Heteromultimer with NS1. Interacts with host RIGI (via N-terminus); this interaction prevents host signaling pathway involved in interferon production. Interacts with host MAP1B/microtubule-associated protein 1B.

It is found in the host mitochondrion. In terms of biological role, plays a major role in antagonizing the type I IFN-mediated antiviral response. Acts cooperatively with NS1 to repress activation and nuclear translocation of host IFN-regulatory factor IRF3. Interacts with the host cytoplasmic sensor of viral nucleic acids RIGI and prevents the interaction with its downstream partner MAVS. Together with NS2, participates in the proteasomal degradation of host STAT2, IRF3, IRF7, TBK1 and RIGI through a NS-degradasome involving CUL2 and Elongin-C. The degradasome requires an intact mitochondrial MAVS. Induces host SOCS1 expression. Induces activation of NF-kappa-B. Suppresses premature apoptosis by an NF-kappa-B-dependent, interferon-independent mechanism promoting continued viral replication. The protein is Non-structural protein 2 (1B) of Homo sapiens (Human).